We begin with the raw amino-acid sequence, 70 residues long: U2-agatoxin-Ao1p (70 aa).

A signal peptide spans 1–20 (MRAIISLILISAMVFSMIAA). A propeptide spanning residues 21–34 (VPXXEGLQLSEDER) is cleaved from the precursor. Intrachain disulfides connect C37–C53, C44–C58, and C52–C68. Position 69 is a leucine amide (L69).

It belongs to the neurotoxin 01 (U2-agtx) family. In terms of tissue distribution, expressed by the venom gland.

The protein localises to the secreted. Its function is as follows. Insect active toxin causing rapid but reversible paralysis in crickets. No activity shown in mammals. Does not show effect on mammalian voltage-gated calcium channels. The sequence is that of U2-agatoxin-Ao1p from Agelena orientalis (Funnel-web spider).